Consider the following 344-residue polypeptide: Methionine import ATP-binding protein MetN (344 aa).

Residues 2 to 241 (LELKQVGKVY…PQAEVTKAFV (240 aa)) form the ABC transporter domain. ATP is bound at residue 38–45 (GYSGAGKS).

The protein belongs to the ABC transporter superfamily. Methionine importer (TC 3.A.1.24) family. The complex is composed of two ATP-binding proteins (MetN), two transmembrane proteins (MetI) and a solute-binding protein (MetQ).

It localises to the cell membrane. It carries out the reaction L-methionine(out) + ATP + H2O = L-methionine(in) + ADP + phosphate + H(+). It catalyses the reaction D-methionine(out) + ATP + H2O = D-methionine(in) + ADP + phosphate + H(+). In terms of biological role, part of the ABC transporter complex MetNIQ involved in methionine import. Responsible for energy coupling to the transport system. This Latilactobacillus sakei subsp. sakei (strain 23K) (Lactobacillus sakei subsp. sakei) protein is Methionine import ATP-binding protein MetN.